Consider the following 428-residue polypeptide: GTPase Obg (428 aa).

The 158-residue stretch at 1–158 folds into the Obg domain; it reads MFVDQVKIYV…RYVTLELKLL (158 aa). The OBG-type G domain occupies 159–329; the sequence is ADVGLVGFPS…LLFAIADLLE (171 aa). GTP is bound by residues 165–172, 190–194, 212–215, 282–285, and 310–312; these read GFPSVGKS, FTTIV, DLPG, NKMD, and SAV. Residues S172 and T192 each coordinate Mg(2+). Positions 350–428 constitute an OCT domain; sequence KLEKEEAPFH…LLNYEFEFVD (79 aa).

This sequence belongs to the TRAFAC class OBG-HflX-like GTPase superfamily. OBG GTPase family. As to quaternary structure, monomer. The cofactor is Mg(2+).

It is found in the cytoplasm. In terms of biological role, an essential GTPase which binds GTP, GDP and possibly (p)ppGpp with moderate affinity, with high nucleotide exchange rates and a fairly low GTP hydrolysis rate. Plays a role in control of the cell cycle, stress response, ribosome biogenesis and in those bacteria that undergo differentiation, in morphogenesis control. The chain is GTPase Obg from Anoxybacillus flavithermus (strain DSM 21510 / WK1).